The primary structure comprises 225 residues: NAD(P)H-quinone oxidoreductase subunit K, chloroplastic (225 aa).

[4Fe-4S] cluster-binding residues include cysteine 43, cysteine 44, cysteine 108, and cysteine 139.

The protein belongs to the complex I 20 kDa subunit family. In terms of assembly, NDH is composed of at least 16 different subunits, 5 of which are encoded in the nucleus. The cofactor is [4Fe-4S] cluster.

Its subcellular location is the plastid. The protein resides in the chloroplast thylakoid membrane. It catalyses the reaction a plastoquinone + NADH + (n+1) H(+)(in) = a plastoquinol + NAD(+) + n H(+)(out). The enzyme catalyses a plastoquinone + NADPH + (n+1) H(+)(in) = a plastoquinol + NADP(+) + n H(+)(out). NDH shuttles electrons from NAD(P)H:plastoquinone, via FMN and iron-sulfur (Fe-S) centers, to quinones in the photosynthetic chain and possibly in a chloroplast respiratory chain. The immediate electron acceptor for the enzyme in this species is believed to be plastoquinone. Couples the redox reaction to proton translocation, and thus conserves the redox energy in a proton gradient. The protein is NAD(P)H-quinone oxidoreductase subunit K, chloroplastic of Capsella bursa-pastoris (Shepherd's purse).